A 41-amino-acid polypeptide reads, in one-letter code: Large ribosomal subunit protein bL36 (41 aa).

The protein belongs to the bacterial ribosomal protein bL36 family.

The sequence is that of Large ribosomal subunit protein bL36 from Bartonella bacilliformis (strain ATCC 35685 / KC583 / Herrer 020/F12,63).